A 413-amino-acid chain; its full sequence is Multifunctional CCA protein (413 aa).

Gly-8 and Arg-11 together coordinate ATP. Residues Gly-8 and Arg-11 each coordinate CTP. 2 residues coordinate Mg(2+): Asp-21 and Asp-23. ATP is bound by residues Arg-91, Arg-143, and Arg-146. The CTP site is built by Arg-91, Arg-143, and Arg-146. One can recognise an HD domain in the interval 232 to 333; the sequence is TGVHVMMVVD…VRFFERSDAL (102 aa).

This sequence belongs to the tRNA nucleotidyltransferase/poly(A) polymerase family. Bacterial CCA-adding enzyme type 1 subfamily. Monomer. Can also form homodimers and oligomers. The cofactor is Mg(2+). It depends on Ni(2+) as a cofactor.

The catalysed reaction is a tRNA precursor + 2 CTP + ATP = a tRNA with a 3' CCA end + 3 diphosphate. It carries out the reaction a tRNA with a 3' CCA end + 2 CTP + ATP = a tRNA with a 3' CCACCA end + 3 diphosphate. Functionally, catalyzes the addition and repair of the essential 3'-terminal CCA sequence in tRNAs without using a nucleic acid template. Adds these three nucleotides in the order of C, C, and A to the tRNA nucleotide-73, using CTP and ATP as substrates and producing inorganic pyrophosphate. tRNA 3'-terminal CCA addition is required both for tRNA processing and repair. Also involved in tRNA surveillance by mediating tandem CCA addition to generate a CCACCA at the 3' terminus of unstable tRNAs. While stable tRNAs receive only 3'-terminal CCA, unstable tRNAs are marked with CCACCA and rapidly degraded. The sequence is that of Multifunctional CCA protein from Burkholderia ambifaria (strain ATCC BAA-244 / DSM 16087 / CCUG 44356 / LMG 19182 / AMMD) (Burkholderia cepacia (strain AMMD)).